The sequence spans 321 residues: Lipoyl synthase (321 aa).

[4Fe-4S] cluster contacts are provided by C68, C73, C79, C94, C98, C101, and S308. A Radical SAM core domain is found at 80–297 (FNHGTATFMI…KEIALELGFT (218 aa)).

It belongs to the radical SAM superfamily. Lipoyl synthase family. [4Fe-4S] cluster is required as a cofactor.

Its subcellular location is the cytoplasm. It catalyses the reaction [[Fe-S] cluster scaffold protein carrying a second [4Fe-4S](2+) cluster] + N(6)-octanoyl-L-lysyl-[protein] + 2 oxidized [2Fe-2S]-[ferredoxin] + 2 S-adenosyl-L-methionine + 4 H(+) = [[Fe-S] cluster scaffold protein] + N(6)-[(R)-dihydrolipoyl]-L-lysyl-[protein] + 4 Fe(3+) + 2 hydrogen sulfide + 2 5'-deoxyadenosine + 2 L-methionine + 2 reduced [2Fe-2S]-[ferredoxin]. It participates in protein modification; protein lipoylation via endogenous pathway; protein N(6)-(lipoyl)lysine from octanoyl-[acyl-carrier-protein]: step 2/2. In terms of biological role, catalyzes the radical-mediated insertion of two sulfur atoms into the C-6 and C-8 positions of the octanoyl moiety bound to the lipoyl domains of lipoate-dependent enzymes, thereby converting the octanoylated domains into lipoylated derivatives. In Aliivibrio fischeri (strain MJ11) (Vibrio fischeri), this protein is Lipoyl synthase.